The following is a 1123-amino-acid chain: Phytochrome 1 (1123 aa).

The span at 1-15 shows a compositional bias: low complexity; the sequence is MSTPKKTYSSTSSAK. Residues 1-20 form a disordered region; sequence MSTPKKTYSSTSSAKSKAHS. The GAF domain maps to 216-395; it reads DIGLLCDTVV…VFGLQLNMEV (180 aa). Position 321 (C321) interacts with phytochromobilin. PAS domains are found at residues 610 to 681 and 744 to 815; these read VANE…LRGE and DYKT…TKFM. In terms of domain architecture, Histidine kinase spans 895–1115; sequence YIRQEIKNPL…VVNVELPMAQ (221 aa).

This sequence belongs to the phytochrome family. As to quaternary structure, homodimer. Post-translationally, contains one covalently linked phytochromobilin chromophore.

It localises to the cytoplasm. In terms of biological role, regulatory photoreceptor which exists in two forms that are reversibly interconvertible by light: the Pr form that absorbs maximally in the red region of the spectrum and the Pfr form that absorbs maximally in the far-red region. Photoconversion of Pr to Pfr induces an array of morphogenetic responses, whereas reconversion of Pfr to Pr cancels the induction of those responses. Pfr controls the expression of a number of nuclear genes including those encoding the small subunit of ribulose-bisphosphate carboxylase, chlorophyll A/B binding protein, protochlorophyllide reductase, rRNA, etc. It also controls the expression of its own gene(s) in a negative feedback fashion. Mediates chloroplast avoidance movement in cytoplasm. This chain is Phytochrome 1 (PHY1), found in Physcomitrium patens (Spreading-leaved earth moss).